The sequence spans 187 residues: Elongation factor P (187 aa).

Belongs to the elongation factor P family.

The protein localises to the cytoplasm. The protein operates within protein biosynthesis; polypeptide chain elongation. In terms of biological role, involved in peptide bond synthesis. Stimulates efficient translation and peptide-bond synthesis on native or reconstituted 70S ribosomes in vitro. Probably functions indirectly by altering the affinity of the ribosome for aminoacyl-tRNA, thus increasing their reactivity as acceptors for peptidyl transferase. This is Elongation factor P (efp) from Helicobacter pylori (strain J99 / ATCC 700824) (Campylobacter pylori J99).